Consider the following 439-residue polypeptide: Maintenance of mitochondrial morphology protein 1 (439 aa).

The Lumenal portion of the chain corresponds to M1–G76. A helical membrane pass occupies residues L77–F97. Residues A98 to I439 are Cytoplasmic-facing. Disordered stretches follow at residues K125 to S145, M309 to T336, and R405 to A425. The SMP-LTD domain occupies A165–P395. Composition is skewed to low complexity over residues E315 to N326 and K410 to S424.

Belongs to the MMM1 family. As to quaternary structure, homodimer. Component of the ER-mitochondria encounter structure (ERMES) or MDM complex, composed of MMM1, MDM10, MDM12 and MDM34. An MMM1 homodimer associates with one molecule of MDM12 on each side in a pairwise head-to-tail manner, and the SMP-LTD domains of MMM1 and MDM12 generate a continuous hydrophobic tunnel for phospholipid trafficking.

Its subcellular location is the endoplasmic reticulum membrane. Functionally, component of the ERMES/MDM complex, which serves as a molecular tether to connect the endoplasmic reticulum (ER) and mitochondria. Components of this complex are involved in the control of mitochondrial shape and protein biogenesis, and function in nonvesicular lipid trafficking between the ER and mitochondria. The MDM12-MMM1 subcomplex functions in the major beta-barrel assembly pathway that is responsible for biogenesis of all outer membrane beta-barrel proteins, and acts in a late step after the SAM complex. The MDM10-MDM12-MMM1 subcomplex further acts in the TOM40-specific pathway after the action of the MDM12-MMM1 complex. Essential for establishing and maintaining the structure of mitochondria and maintenance of mtDNA nucleoids. The polypeptide is Maintenance of mitochondrial morphology protein 1 (Candida albicans (strain WO-1) (Yeast)).